Consider the following 442-residue polypeptide: Protein bag of marbles (442 aa).

Residues 201-250 are required for interaction with ubiquitin; sequence FDMPVKSTMPKSLNVRYQLQVLCTKVERFLVQQRRTLEANRHFDFEKYDE. The interval 408–442 is disordered; that stretch reads VSMEQPSASEEEFEETEEVPSSPPRHTGRVPRFRS. The span at 416-425 shows a compositional bias: acidic residues; that stretch reads SEEEFEETEE. A compositionally biased stretch (basic residues) spans 433-442; sequence HTGRVPRFRS.

Interacts (via central region) with ubiquitin. Interacts (via C-terminus) with otu (via OTU domain); the interaction enhances otu aggregation into amyloid-like structures and enhances its deubiquitinase activity. Together with otu interacts with CycA/cyclin-A (via C-terminus); the interaction stabilizes CycA by promoting and enhancing otu dependent deubiquitination of CycA. Together with otu interacts with Traf6. Part of a complex composed of at least tut, bam and bgcn; complex formation does not require RNA. Interacts (via C-terminus) with bgcn; the interaction is direct and is not disrupted by eIF4A. Interacts with eIF4A (via multiple contacts); the interaction is direct and is not disrupted by bgcn. Interacts (via N-terminus) with tut; the interaction is direct and mediates the interaction between tut and bgcn. As part of the bam-bgcn-tut complex associates with twin; may recruit the CCR4-NOT1 deadenylation complex to mRNA 3'-UTRs to mediate post-transcriptional regulation of expression. Part of a complex composed of at least mei-P26, bam, bgcn and Sxl; this complex is involved in translational repression of nanos mRNA. Post-translationally, ubiquitinated (C-terminal region). In cystoblasts and/or very early cystocytes in testis (at protein level); expression levels are regulated by mei-P26. In cystoblasts and/or very early cystocytes in ovary. Expressed in the gut; expression levels increase with age.

It is found in the cytoplasm. Functionally, regulatory component of a deubiquitinase complex consisting of bam and otu. The complex deubiquitinates K63-linked polyubiquitinated proteins, antagonizing the ubiquitination activity of Traf6 and regulating the IMD immune signaling pathway. Otu-bam deubiquitinase activity is regulated by Traf6 dependent immune signaling regulation of bam expression levels; this forms a feedback loop that regulates the IMD immune signaling pathway and balances gut immune activity during aging. The complex deubiquitinates and stabilizes CycA/cyclin-A to regulate CycA-dependent differentiation. Required to initiate both male and female gametogenesis. Part of a complex with bgcn involved in 3'-UTR-dependent translational repression of a subset of mRNAs, including those for mei-P26, nanos and shg/E-cadherin. Repression of mei-P26 is targeted by let-7 miRNA. Involved in a regulatory cascade with mei-P26 to control the progression of cystocytes through transit amplification and the switch to spermatocyte differentiation; mei-P26 facilitates bam accumulation, which in turn represses translation of mei-P26. Forms a complex with tut and bgcn involved in 3'-UTR-dependent post-transcriptional repression of several 3'-RNA processing factors, which promotes germline stem cell lineage differentiation and mitosis-to-meiosis transition. The sequence is that of Protein bag of marbles from Drosophila melanogaster (Fruit fly).